Here is a 122-residue protein sequence, read N- to C-terminus: Ribonuclease P protein component (122 aa).

The protein belongs to the RnpA family. As to quaternary structure, consists of a catalytic RNA component (M1 or rnpB) and a protein subunit.

It catalyses the reaction Endonucleolytic cleavage of RNA, removing 5'-extranucleotides from tRNA precursor.. In terms of biological role, RNaseP catalyzes the removal of the 5'-leader sequence from pre-tRNA to produce the mature 5'-terminus. It can also cleave other RNA substrates such as 4.5S RNA. The protein component plays an auxiliary but essential role in vivo by binding to the 5'-leader sequence and broadening the substrate specificity of the ribozyme. The polypeptide is Ribonuclease P protein component (Halorhodospira halophila (strain DSM 244 / SL1) (Ectothiorhodospira halophila (strain DSM 244 / SL1))).